A 128-amino-acid chain; its full sequence is Protein BEX1 (128 aa).

Residues Met1–Leu37 are disordered. A Phosphoserine modification is found at Ser105. Residues Ser107 to Pro128 are disordered. The segment covering Pro115 to Pro128 has biased composition (basic and acidic residues). A his cluster region spans residues His117 to His121. Cys125 provides a ligand contact to Zn(2+).

The protein belongs to the BEX family. As to quaternary structure, interacts with neurotrophin receptor p75NTR/NGFR. Interacts with OMP. Phosphorylated. Phosphorylation of Ser-105 protects it from the proteasome. Post-translationally, ubiquitinated. Degraded by the proteasome.

It is found in the nucleus. The protein resides in the cytoplasm. Signaling adapter molecule involved in p75NTR/NGFR signaling. Plays a role in cell cycle progression and neuronal differentiation. Inhibits neuronal differentiation in response to nerve growth factor (NGF). May act as a link between the cell cycle and neurotrophic factor signaling, possibly by functioning as an upstream modulator of receptor signaling, coordinating biological responses to external signals with internal cellular states. In absence of reductive stress, acts as a pseudosubstrate for the CRL2(FEM1B) complex: associates with FEM1B via zinc, thereby preventing association between FEM1B and its substrates. In Macaca fascicularis (Crab-eating macaque), this protein is Protein BEX1 (BEX1).